Consider the following 783-residue polypeptide: Centrosomal protein of 89 kDa (783 aa).

A disordered region spans residues P28–R49. Residues R34–P45 are compositionally biased toward pro residues. S50 is modified (phosphoserine). Disordered stretches follow at residues G63–Y157 and D176–G226. Positions A94 to S107 are enriched in polar residues. 2 stretches are compositionally biased toward basic and acidic residues: residues E139–D155 and Q196–L214. Coiled coils occupy residues E234–Q333 and L369–E719.

It is found in the cytoplasm. Its subcellular location is the cytosol. The protein resides in the cytoskeleton. The protein localises to the microtubule organizing center. It localises to the centrosome. It is found in the spindle pole. Its subcellular location is the centriole. The protein resides in the mitochondrion intermembrane space. Functionally, required for ciliogenesis. Also plays a role in mitochondrial metabolism where it may modulate complex IV activity. The polypeptide is Centrosomal protein of 89 kDa (CEP89) (Homo sapiens (Human)).